The chain runs to 492 residues: UDP-N-acetylmuramoyl-L-alanyl-D-glutamate--2,6-diaminopimelate ligase (492 aa).

Residue Ser-30 participates in UDP-N-acetyl-alpha-D-muramoyl-L-alanyl-D-glutamate binding. 114-120 contributes to the ATP binding site; that stretch reads GTNGKTS. Residues 156 to 157, Ser-183, Gln-189, and Arg-191 each bind UDP-N-acetyl-alpha-D-muramoyl-L-alanyl-D-glutamate; that span reads TT. N6-carboxylysine is present on Lys-223. Meso-2,6-diaminopimelate is bound by residues Arg-389, 413 to 416, Gly-462, and Glu-466; that span reads DNPR. Residues 413 to 416 carry the Meso-diaminopimelate recognition motif motif; that stretch reads DNPR.

This sequence belongs to the MurCDEF family. MurE subfamily. Requires Mg(2+) as cofactor. In terms of processing, carboxylation is probably crucial for Mg(2+) binding and, consequently, for the gamma-phosphate positioning of ATP.

Its subcellular location is the cytoplasm. The catalysed reaction is UDP-N-acetyl-alpha-D-muramoyl-L-alanyl-D-glutamate + meso-2,6-diaminopimelate + ATP = UDP-N-acetyl-alpha-D-muramoyl-L-alanyl-gamma-D-glutamyl-meso-2,6-diaminopimelate + ADP + phosphate + H(+). It functions in the pathway cell wall biogenesis; peptidoglycan biosynthesis. Catalyzes the addition of meso-diaminopimelic acid to the nucleotide precursor UDP-N-acetylmuramoyl-L-alanyl-D-glutamate (UMAG) in the biosynthesis of bacterial cell-wall peptidoglycan. The protein is UDP-N-acetylmuramoyl-L-alanyl-D-glutamate--2,6-diaminopimelate ligase of Neisseria meningitidis serogroup B (strain ATCC BAA-335 / MC58).